The following is a 152-amino-acid chain: Transcription factor XE1.1 (152 aa).

2 disordered regions span residues 1-54 (RDDF…ANNA) and 123-152 (KVSA…MGHM). Basic and acidic residues-rich tracts occupy residues 7 to 22 (DDMK…EMKS) and 38 to 54 (PEQK…ANNA). The region spanning 47–100 (ERRMANNARERLRVRDINEAFKELGRMCQLHLKSEKPQTKLLILHQAVAVILNL) is the bHLH domain. Residues 102-125 (QQVRERNLNPKAACLKRREEEKVS) are class A specific domain. Residues 143-152 (TDTTNPMGHM) are compositionally biased toward polar residues.

As to quaternary structure, efficient DNA binding requires dimerization with another bHLH protein. Forms homo- or heterooligomers with myogenin, E12 and ITF2 proteins.

The protein resides in the nucleus. Functionally, transcriptional regulator. Involved in the initiation of neuronal differentiation. Activates transcription by binding to the E box-containing promoter. The sequence is that of Transcription factor XE1.1 from Xenopus laevis (African clawed frog).